The chain runs to 204 residues: Tetraspanin-13 (204 aa).

The Cytoplasmic portion of the chain corresponds to 1 to 19 (MVCGGFSCSKNCLCALNLL). The helical transmembrane segment at 20 to 40 (YTLVSLLLIGIAAWGIGFGLI) threads the bilayer. Residues 41 to 44 (SSLR) are Extracellular-facing. Residues 45–65 (VVGVVIAVGIFLFLIALVGLI) traverse the membrane as a helical segment. At 66 to 72 (GAVKHHQ) the chain is on the cytoplasmic side. Residues 73-93 (VLLFFYMIILLLVFIVQFSVS) form a helical membrane-spanning segment. The Extracellular segment spans residues 94-167 (CACLALNREQ…IGEYAGEVLR (74 aa)). 2 N-linked (GlcNAc...) asparagine glycosylation sites follow: asparagine 113 and asparagine 137. The residue at position 143 (serine 143) is a Phosphoserine. Residues 168–188 (FVGGIGLFFSFTEILGVWLTY) form a helical membrane-spanning segment. Over 189-204 (RYRNQKDPRANPSAFL) the chain is Cytoplasmic.

Belongs to the tetraspanin (TM4SF) family.

Its subcellular location is the membrane. The polypeptide is Tetraspanin-13 (Tspan13) (Mus musculus (Mouse)).